The chain runs to 555 residues: Urocanate hydratase (555 aa).

Residues 52–53 (GG), Gln-130, 176–178 (GMG), Glu-196, Arg-201, 242–243 (NA), 263–267 (QTSAH), 273–274 (YL), and Tyr-322 contribute to the NAD(+) site. Cys-410 is an active-site residue. Gly-492 contacts NAD(+).

This sequence belongs to the urocanase family. Requires NAD(+) as cofactor.

It is found in the cytoplasm. The catalysed reaction is 4-imidazolone-5-propanoate = trans-urocanate + H2O. The protein operates within amino-acid degradation; L-histidine degradation into L-glutamate; N-formimidoyl-L-glutamate from L-histidine: step 2/3. Catalyzes the conversion of urocanate to 4-imidazolone-5-propionate. This Shewanella baltica (strain OS155 / ATCC BAA-1091) protein is Urocanate hydratase.